The chain runs to 258 residues: Small ribosomal subunit protein uS2 (258 aa).

It belongs to the universal ribosomal protein uS2 family.

The protein is Small ribosomal subunit protein uS2 of Leuconostoc mesenteroides subsp. mesenteroides (strain ATCC 8293 / DSM 20343 / BCRC 11652 / CCM 1803 / JCM 6124 / NCDO 523 / NBRC 100496 / NCIMB 8023 / NCTC 12954 / NRRL B-1118 / 37Y).